A 122-amino-acid chain; its full sequence is Beta-2-microglobulin (122 aa).

Positions 1-22 (MMARIFILALLGQLCFLPYLDA) are cleaved as a signal peptide. Positions 27-115 (PKVQVYSRHP…HLTLQEPKVV (89 aa)) constitute an Ig-like C1-type domain. A disulfide bridge connects residues cysteine 47 and cysteine 102.

It belongs to the beta-2-microglobulin family. Heterodimer of an alpha chain and a beta chain. Beta-2-microglobulin is the beta-chain of major histocompatibility complex class I molecules.

It localises to the secreted. Component of the class I major histocompatibility complex (MHC). Involved in the presentation of peptide antigens to the immune system. The polypeptide is Beta-2-microglobulin (B2M) (Trichosurus vulpecula (Brush-tailed possum)).